A 179-amino-acid polypeptide reads, in one-letter code: Plasmid-derived single-stranded DNA-binding protein (179 aa).

In terms of domain architecture, SSB spans 6–110 (INKVILVGRL…ILVKTTGTMQ (105 aa)). A DNA-binding region spans residues 55 to 61 (WHRVVLF). The disordered stretch occupies residues 117–179 (GAQTQPEEGQ…DYGFSDDIPF (63 aa)). A compositionally biased stretch (polar residues) spans 118 to 132 (AQTQPEEGQQFSGQP). The span at 145-155 (GGAKTKGRGRK) shows a compositional bias: basic residues. A compositionally biased stretch (acidic residues) spans 167–179 (EGDDYGFSDDIPF).

As to quaternary structure, homotetramer.

In terms of biological role, may contribute to the conjugative processing of DNA. It has a functional relationship with Psi (plasmid-mediated sos inhibition) proteins. In Escherichia coli (strain K12), this protein is Plasmid-derived single-stranded DNA-binding protein (ssbF).